Reading from the N-terminus, the 596-residue chain is Aspartic proteinase yapsin-7 (596 aa).

The signal sequence occupies residues 1–25 (MTCLILWYLWLISTFQLEFATASTA). Residues N26 and N59 are each glycosylated (N-linked (GlcNAc...) asparagine). Over 26–575 (NTTTTAKSGT…SPYTFNKDPA (550 aa)) the chain is Lumenal. Positions 56–440 (YYVNSTFGTP…DLEDNTIAIA (385 aa)) constitute a Peptidase A1 domain. D74 is a catalytic residue. N-linked (GlcNAc...) asparagine glycosylation is found at N106, N131, N140, N143, N148, N175, and N308. The active site involves D321. N391, N455, N478, N484, N549, and N552 each carry an N-linked (GlcNAc...) asparagine glycan. A helical transmembrane segment spans residues 576-596 (GHVTRIASLLLLSIFSILIVL).

This sequence belongs to the peptidase A1 family.

The protein resides in the cytoplasm. It is found in the endoplasmic reticulum membrane. The sequence is that of Aspartic proteinase yapsin-7 (YPS7) from Saccharomyces cerevisiae (strain ATCC 204508 / S288c) (Baker's yeast).